The following is a 243-amino-acid chain: 23S rRNA (guanosine-2'-O-)-methyltransferase RlmB (243 aa).

S-adenosyl-L-methionine contacts are provided by G196, I216, and L225.

Belongs to the class IV-like SAM-binding methyltransferase superfamily. RNA methyltransferase TrmH family. RlmB subfamily. In terms of assembly, homodimer.

The protein resides in the cytoplasm. It catalyses the reaction guanosine(2251) in 23S rRNA + S-adenosyl-L-methionine = 2'-O-methylguanosine(2251) in 23S rRNA + S-adenosyl-L-homocysteine + H(+). In terms of biological role, specifically methylates the ribose of guanosine 2251 in 23S rRNA. The protein is 23S rRNA (guanosine-2'-O-)-methyltransferase RlmB of Shigella flexneri.